A 275-amino-acid polypeptide reads, in one-letter code: NH(3)-dependent NAD(+) synthetase (275 aa).

ATP is bound at residue 47 to 54; the sequence is GISGGQDS. Position 53 (Asp-53) interacts with Mg(2+). Position 141 (Arg-141) interacts with deamido-NAD(+). Residue Thr-161 coordinates ATP. Glu-166 contacts Mg(2+). Deamido-NAD(+)-binding residues include Lys-174 and Asp-181. ATP is bound by residues Lys-190 and Thr-212. 261-262 is a deamido-NAD(+) binding site; that stretch reads HK.

The protein belongs to the NAD synthetase family. Homodimer.

It carries out the reaction deamido-NAD(+) + NH4(+) + ATP = AMP + diphosphate + NAD(+) + H(+). It functions in the pathway cofactor biosynthesis; NAD(+) biosynthesis; NAD(+) from deamido-NAD(+) (ammonia route): step 1/1. In terms of biological role, catalyzes the ATP-dependent amidation of deamido-NAD to form NAD. Uses ammonia as a nitrogen source. In Enterococcus faecalis (strain ATCC 700802 / V583), this protein is NH(3)-dependent NAD(+) synthetase.